Reading from the N-terminus, the 193-residue chain is Early light-induced protein 2, chloroplastic (193 aa).

A chloroplast-targeting transit peptide spans Met1–Met43. Residues Gly46–Val80 are disordered. A compositionally biased stretch (low complexity) spans Ser54–Pro64. Over residues Pro65–Ser76 the composition is skewed to pro residues. Transmembrane regions (helical) follow at residues Leu102 to Phe122, Gly129 to Phe149, and Phe173 to Val193.

It belongs to the ELIP/psbS family.

The protein localises to the plastid. Its subcellular location is the chloroplast thylakoid membrane. Its function is as follows. Probably involved in the integration of pigments into the mature light-harvesting pigment-protein complexes. Light-harvesting chlorophyll (LHC) a/b-binding protein required to ensure a high rate of chlorophyll accumulation during deetiolation in continuous high light. Involved in seed germination. May fulfill a photoprotective functions. Prevents excess accumulation of free chlorophyll by inhibiting the entire chlorophyll biosynthesis pathway (e.g. 5-aminolevulinate synthesis and Mg-protoporphyrin IX chelatase activity), and hence prevent photooxidative stress. This Arabidopsis thaliana (Mouse-ear cress) protein is Early light-induced protein 2, chloroplastic.